We begin with the raw amino-acid sequence, 398 residues long: Succinate--CoA ligase [ADP-forming] subunit beta (398 aa).

Residues 9–254 (KRLLHEYGAP…ISEEDPKEIE (246 aa)) enclose the ATP-grasp domain. Residues K46, 53-55 (GRG), E109, A112, and E117 contribute to the ATP site. Residues N209 and D223 each coordinate Mg(2+). Residues N274 and 331 to 333 (GIM) each bind substrate.

Belongs to the succinate/malate CoA ligase beta subunit family. As to quaternary structure, heterotetramer of two alpha and two beta subunits. It depends on Mg(2+) as a cofactor.

It carries out the reaction succinate + ATP + CoA = succinyl-CoA + ADP + phosphate. The enzyme catalyses GTP + succinate + CoA = succinyl-CoA + GDP + phosphate. Its pathway is carbohydrate metabolism; tricarboxylic acid cycle; succinate from succinyl-CoA (ligase route): step 1/1. In terms of biological role, succinyl-CoA synthetase functions in the citric acid cycle (TCA), coupling the hydrolysis of succinyl-CoA to the synthesis of either ATP or GTP and thus represents the only step of substrate-level phosphorylation in the TCA. The beta subunit provides nucleotide specificity of the enzyme and binds the substrate succinate, while the binding sites for coenzyme A and phosphate are found in the alpha subunit. The chain is Succinate--CoA ligase [ADP-forming] subunit beta from Bartonella bacilliformis (strain ATCC 35685 / KC583 / Herrer 020/F12,63).